Here is a 258-residue protein sequence, read N- to C-terminus: Undecaprenyl-diphosphatase (258 aa).

The next 8 membrane-spanning stretches (helical) occupy residues methionine 1 to valine 21, leucine 42 to phenylalanine 62, leucine 71 to serine 91, leucine 96 to valine 116, glycine 134 to glycine 154, glutamine 173 to tyrosine 193, leucine 211 to leucine 231, and phenylalanine 237 to valine 257.

The protein belongs to the UppP family.

The protein localises to the cell inner membrane. The catalysed reaction is di-trans,octa-cis-undecaprenyl diphosphate + H2O = di-trans,octa-cis-undecaprenyl phosphate + phosphate + H(+). Catalyzes the dephosphorylation of undecaprenyl diphosphate (UPP). Confers resistance to bacitracin. This Campylobacter hominis (strain ATCC BAA-381 / DSM 21671 / CCUG 45161 / LMG 19568 / NCTC 13146 / CH001A) protein is Undecaprenyl-diphosphatase.